The sequence spans 501 residues: Chromosomal replication initiator protein DnaA (501 aa).

The domain I, interacts with DnaA modulators stretch occupies residues 1-90 (MSVELWQQCV…KRSSAPRAAP (90 aa)). A domain II region spans residues 91 to 164 (NAPLAAAASQ…QVEGALKHTS (74 aa)). The segment covering 103–121 (AAPVASTPAPAPSKSSAKK) has biased composition (low complexity). The segment at 103 to 150 (AAPVASTPAPAPSKSSAKKNAAENEEPSRDSFDPMAGASSQQAPIRAE) is disordered. Over residues 122-134 (NAAENEEPSRDSF) the composition is skewed to basic and acidic residues. Positions 165-381 (YLNRTFTFEN…GALKRVIAHS (217 aa)) are domain III, AAA+ region. Residues Gly-209, Gly-211, Lys-212, and Thr-213 each contribute to the ATP site. The segment at 382–501 (HFMGRDITIE…YKNLLRTLTT (120 aa)) is domain IV, binds dsDNA.

The protein belongs to the DnaA family. Oligomerizes as a right-handed, spiral filament on DNA at oriC.

The protein resides in the cytoplasm. Plays an essential role in the initiation and regulation of chromosomal replication. ATP-DnaA binds to the origin of replication (oriC) to initiate formation of the DNA replication initiation complex once per cell cycle. Binds the DnaA box (a 9 base pair repeat at the origin) and separates the double-stranded (ds)DNA. Forms a right-handed helical filament on oriC DNA; dsDNA binds to the exterior of the filament while single-stranded (ss)DNA is stabiized in the filament's interior. The ATP-DnaA-oriC complex binds and stabilizes one strand of the AT-rich DNA unwinding element (DUE), permitting loading of DNA polymerase. After initiation quickly degrades to an ADP-DnaA complex that is not apt for DNA replication. Binds acidic phospholipids. This chain is Chromosomal replication initiator protein DnaA, found in Pseudomonas fluorescens (strain SBW25).